A 421-amino-acid polypeptide reads, in one-letter code: Histidine--tRNA ligase (421 aa).

This sequence belongs to the class-II aminoacyl-tRNA synthetase family. As to quaternary structure, homodimer.

The protein resides in the cytoplasm. It catalyses the reaction tRNA(His) + L-histidine + ATP = L-histidyl-tRNA(His) + AMP + diphosphate + H(+). The protein is Histidine--tRNA ligase of Coxiella burnetii (strain Dugway 5J108-111).